Here is a 366-residue protein sequence, read N- to C-terminus: tRNA pseudouridine synthase B (366 aa).

The Nucleophile role is filled by Asp44.

This sequence belongs to the pseudouridine synthase TruB family. Type 1 subfamily.

It catalyses the reaction uridine(55) in tRNA = pseudouridine(55) in tRNA. Its function is as follows. Responsible for synthesis of pseudouridine from uracil-55 in the psi GC loop of transfer RNAs. The protein is tRNA pseudouridine synthase B of Treponema pallidum (strain Nichols).